Consider the following 393-residue polypeptide: 2-nitroimidazole transporter (393 aa).

Residues 1 to 12 (MTCSTSLSGKNR) are Cytoplasmic-facing. The helical transmembrane segment at 13-33 (IVLIAGILMIATTLRVTFTGA) threads the bilayer. At 34-52 (APLLDTIRSAYSLTTAQTG) the chain is on the periplasmic side. A helical transmembrane segment spans residues 53-73 (LLTTLPLLAFALISPLAAPVA). The Cytoplasmic segment spans residues 74 to 80 (RRFGMER). The next 2 membrane-spanning stretches (helical) occupy residues 81 to 101 (SLFA…LPSP) and 102 to 122 (YLLF…NVLL). The Cytoplasmic segment spans residues 123–140 (PGLIKRDFPHSVARLTGA). The chain crosses the membrane as a helical span at residues 141 to 161 (YSLTMGAAAALGSAMVVPLAL). Topologically, residues 162-163 (NG) are periplasmic. The helical transmembrane segment at 164-184 (FGWQGALLMLMCFPLLALFLW) threads the bilayer. The Cytoplasmic portion of the chain corresponds to 185–218 (LPQWRSQQHANLSTSRALHTRGIWRSPLAWQVTL). A helical membrane pass occupies residues 219–239 (FLGINSLVYYVIIGWLPAILI). The Periplasmic segment spans residues 240 to 249 (SHGYSEAQAG). A helical transmembrane segment spans residues 250–270 (SLHGLLQLATAAPGLLIPLFL). The Cytoplasmic portion of the chain corresponds to 271–278 (HHVKDQRG). A helical membrane pass occupies residues 279–299 (IAAFVALMCAVGAVGLCFMPA). Residues 300-304 (HAITW) are Periplasmic-facing. Residues 305-325 (TLLFGFGSGATMILGLTFIGL) traverse the membrane as a helical segment. At 326–334 (RASSAHQAA) the chain is on the cytoplasmic side. The helical transmembrane segment at 335–355 (ALSGMAQSVGYLLAACGPPLM) threads the bilayer. Topologically, residues 356-366 (GKIHDANGNWS) are periplasmic. Residues 367–387 (VPLMGVAILSLLMAIFGLCAG) traverse the membrane as a helical segment. The Cytoplasmic segment spans residues 388–393 (RDKEIR).

The protein belongs to the major facilitator superfamily. Cyanate porter (TC 2.A.1.17) family.

The protein localises to the cell inner membrane. Involved in efflux of 2-nitroimidazole. The chain is 2-nitroimidazole transporter from Escherichia coli (strain K12).